Reading from the N-terminus, the 127-residue chain is S1-like domain-containing protein C146.08c (127 aa).

The region spanning 10 to 86 (SFDPPARLEK…NKIDGTILYV (77 aa)) is the S1-like domain. A disordered region spans residues 107 to 127 (ESLNQNDSEESSSSEEEYDSD). Acidic residues predominate over residues 113–127 (DSEESSSSEEEYDSD). A Phosphotyrosine modification is found at Tyr124. Position 126 is a phosphoserine (Ser126).

Belongs to the EIF1AD family.

The protein localises to the cytoplasm. Its subcellular location is the nucleus. The protein is S1-like domain-containing protein C146.08c of Schizosaccharomyces pombe (strain 972 / ATCC 24843) (Fission yeast).